Consider the following 195-residue polypeptide: GTP-dependent dephospho-CoA kinase (195 aa).

GTP-binding residues include Asp-49, Val-50, Asp-68, Glu-127, and Asp-150.

Belongs to the GTP-dependent DPCK family.

It carries out the reaction 3'-dephospho-CoA + GTP = GDP + CoA + H(+). Its pathway is cofactor biosynthesis; coenzyme A biosynthesis. Its function is as follows. Catalyzes the GTP-dependent phosphorylation of the 3'-hydroxyl group of dephosphocoenzyme A to form coenzyme A (CoA). The protein is GTP-dependent dephospho-CoA kinase of Methanosarcina acetivorans (strain ATCC 35395 / DSM 2834 / JCM 12185 / C2A).